The sequence spans 287 residues: Nucleotide-binding protein Pmob_0154 (287 aa).

15-22 provides a ligand contact to ATP; sequence GLSGAGKT. Residue 64-67 coordinates GTP; the sequence is DIRW.

It belongs to the RapZ-like family.

Functionally, displays ATPase and GTPase activities. The protein is Nucleotide-binding protein Pmob_0154 of Petrotoga mobilis (strain DSM 10674 / SJ95).